A 311-amino-acid polypeptide reads, in one-letter code: ATP synthase gamma chain (311 aa).

A disulfide bridge links Cys67 with Cys138.

This sequence belongs to the ATPase gamma chain family. In terms of assembly, F-type ATPases have 2 components, CF(1) - the catalytic core - and CF(0) - the membrane proton channel. CF(1) has five subunits: alpha(3), beta(3), gamma(1), delta(1), epsilon(1). CF(0) has three main subunits: a, b and c.

The protein resides in the cellular thylakoid membrane. Thiol-modulation by raising the activation threshold of the enzyme upon oxidation of the cysteines, thereby preventing wasteful ATP-hydrolysis. Functionally, produces ATP from ADP in the presence of a proton gradient across the membrane. The gamma chain is believed to be important in regulating ATPase activity and the flow of protons through the CF(0) complex. This is ATP synthase gamma chain (atpG) from Arthrospira platensis (Spirulina platensis).